The following is a 267-amino-acid chain: Small ribosomal subunit protein uS2 (267 aa).

The tract at residues 226–267 (AAAPNSASVREEEFSAESADEGKGRRAPAKKGEKKADAPAAE) is disordered. Residues 245 to 267 (DEGKGRRAPAKKGEKKADAPAAE) are compositionally biased toward basic and acidic residues.

This sequence belongs to the universal ribosomal protein uS2 family.

This Xanthomonas oryzae pv. oryzae (strain MAFF 311018) protein is Small ribosomal subunit protein uS2.